Consider the following 214-residue polypeptide: Adenylate kinase (214 aa).

Residue 10–15 (GAGKGT) participates in ATP binding. An NMP region spans residues 30–59 (STGDMLRAAVKAGTELGKQAKEIMDAGKLV). AMP contacts are provided by residues T31, R36, 57-59 (KLV), 85-88 (GFPR), and Q92. Residues 122–159 (GRRVHAASGRVYHVKFNPPKVEDKDDVTGEDLSVRKDD) form an LID region. Residues R123 and 132–133 (VY) contribute to the ATP site. AMP is bound by residues R156 and R167. ATP is bound at residue R200.

This sequence belongs to the adenylate kinase family. Monomer.

Its subcellular location is the cytoplasm. The catalysed reaction is AMP + ATP = 2 ADP. It participates in purine metabolism; AMP biosynthesis via salvage pathway; AMP from ADP: step 1/1. In terms of biological role, catalyzes the reversible transfer of the terminal phosphate group between ATP and AMP. Plays an important role in cellular energy homeostasis and in adenine nucleotide metabolism. The polypeptide is Adenylate kinase (Pectobacterium atrosepticum (strain SCRI 1043 / ATCC BAA-672) (Erwinia carotovora subsp. atroseptica)).